The chain runs to 473 residues: Bestrophin-4 (473 aa).

Over Met1–Leu31 the chain is Cytoplasmic. Ala10 serves as a coordination point for Ca(2+). The chain crosses the membrane as a helical span at residues Leu32 to Arg51. Topologically, residues Leu52 to Tyr60 are extracellular. Residues Val61–Leu82 form a helical membrane-spanning segment. At Gly83–Thr237 the chain is on the cytoplasmic side. The helical transmembrane segment at Gln238–Arg255 threads the bilayer. Topologically, residues Gln256 to Pro289 are extracellular. Residues Leu290–Leu303 traverse the membrane as a helical segment. Residues Lys304–Pro473 lie on the Cytoplasmic side of the membrane. Residues Gln308, Asn311, Asp316, and Asp319 each contribute to the Ca(2+) site. 2 disordered regions span residues Thr379 to Gln408 and Arg428 to Pro473. Residues Ala396–Ala407 are compositionally biased toward low complexity. Residues Phe445 to Glu461 show a composition bias toward basic and acidic residues. Positions Glu462–Pro473 are enriched in acidic residues.

The protein belongs to the anion channel-forming bestrophin (TC 1.A.46) family. Calcium-sensitive chloride channel subfamily. As to expression, predominantly found in colon and the weakly in fetal brain, spinal cord, retina, lung, trachea, testis and placenta.

Its subcellular location is the cell membrane. It carries out the reaction chloride(in) = chloride(out). It catalyses the reaction hydrogencarbonate(in) = hydrogencarbonate(out). Its function is as follows. Ligand-gated anion channel that allows the movement of anions across cell membranes when activated by Calcium (Ca2+). Mediates the movement of hydrogencarbonate and chloride. In Homo sapiens (Human), this protein is Bestrophin-4.